The chain runs to 445 residues: Dihydroorotate dehydrogenase (quinone), mitochondrial (445 aa).

A mitochondrion-targeting transit peptide spans 1 to 16; that stretch reads MNSGFPRILSKKLFTL. The helical transmembrane segment at 39 to 56 threads the bilayer; that stretch reads LLKYTVGIAIGSFAGFYF. Residues 124 to 128 and Ser-148 each bind FMN; that span reads AGLDK. Lys-128 provides a ligand contact to substrate. Residue 173-177 coordinates substrate; sequence NRYGF. Positions 221 and 251 each coordinate FMN. Substrate is bound at residue 251–256; the sequence is NVSSPN. Ser-254 serves as the catalytic Nucleophile. 2 residues coordinate FMN: Lys-302 and Ser-330. 331–332 is a substrate binding site; that stretch reads NT. Residues Gly-356, Gly-386, and 407–408 contribute to the FMN site; that span reads YT.

The protein belongs to the dihydroorotate dehydrogenase family. Type 2 subfamily. FMN serves as cofactor.

It is found in the mitochondrion inner membrane. It carries out the reaction (S)-dihydroorotate + a quinone = orotate + a quinol. Its pathway is pyrimidine metabolism; UMP biosynthesis via de novo pathway; orotate from (S)-dihydroorotate (quinone route): step 1/1. Functionally, catalyzes the conversion of dihydroorotate to orotate with quinone as electron acceptor. In Kluyveromyces lactis (strain ATCC 8585 / CBS 2359 / DSM 70799 / NBRC 1267 / NRRL Y-1140 / WM37) (Yeast), this protein is Dihydroorotate dehydrogenase (quinone), mitochondrial (URA9).